A 100-amino-acid polypeptide reads, in one-letter code: Probable DNA-binding protein HU (100 aa).

Belongs to the bacterial histone-like protein family.

Functionally, histone-like DNA-binding protein which is capable of wrapping DNA to stabilize it, and thus to prevent its denaturation under extreme environmental conditions. The protein is Probable DNA-binding protein HU (hup) of Chlamydia pneumoniae (Chlamydophila pneumoniae).